A 103-amino-acid polypeptide reads, in one-letter code: Large ribosomal subunit protein bL21 (103 aa).

The protein belongs to the bacterial ribosomal protein bL21 family. Part of the 50S ribosomal subunit. Contacts protein L20.

Functionally, this protein binds to 23S rRNA in the presence of protein L20. This Nitrosomonas europaea (strain ATCC 19718 / CIP 103999 / KCTC 2705 / NBRC 14298) protein is Large ribosomal subunit protein bL21.